We begin with the raw amino-acid sequence, 1119 residues long: DISARM protein DrmA (1119 aa).

The segment at 73–95 is disordered; that stretch reads PESGMEEDVEQQRNSELEQEAEE. A Helicase C-terminal domain is found at 813-986; that stretch reads ELSKYIDPYR…ATPYASRARD (174 aa).

Belongs to the helicase family.

The protein localises to the cytoplasm. In terms of biological role, component of antiviral defense system DISARM (defense island system associated with restriction-modification), composed of DrmE, DrmA, DrmB, DrmC and DrmMII. DISARM is probably a multi-gene restriction module, this subunit is probably a helicase. Expression of DISARM in B.subtilis (strain BEST7003) confers resistance to phages Nf, phi29, phi105, phi3T, SPO1, SPR and SPP1. Protection is over 10(7)-fold against phi3T, 10(4)-10(5)-fold against Nf, phi29, phi105 and SPR, 100-fold against SPO1 and 10-fold against SPP1. DISARM does not interfere with phage adsorption, but instead interferes with (phi3T) DNA replication early in its cycle, preventing replication, circularization and lysogeny and probably causes phage DNA degradation (DNA is degraded in SPP1-infected cells). The polypeptide is DISARM protein DrmA (Bacillus paralicheniformis (strain ATCC 9945a / NCIMB 11709 / CD-2)).